A 967-amino-acid polypeptide reads, in one-letter code: Regulator of G-protein signaling 3 (967 aa).

A PDZ domain is found at 18–95; sequence QITIRRGKDG…EIILLVWRVV (78 aa). The tract at residues 115–135 is disordered; that stretch reads THDLLSPPNKREKNCTHGAPT. Omega-N-methylarginine is present on Arg-167. Residues 389-705 form a disordered region; sequence QLAATPTERK…EGGLSLRVQN (317 aa). 3 stretches are compositionally biased toward polar residues: residues 476–486, 512–549, and 577–597; these read LPSSKNPSPSQ, SPSSEDIATCQNPPQSPETSTSKDSPPGQGSSPTTEVP, and SSASDQNVLPSQESPPSQGSL. Over residues 650 to 676 the composition is skewed to acidic residues; it reads GEDEDAEEGEEGEEGEEDEEDDTNDDN. Positions 677-687 are enriched in basic and acidic residues; it reads YGDRNEAKRSS. A phosphoserine mark is found at Ser-713, Ser-716, Ser-748, and Ser-777. The disordered stretch occupies residues 807 to 830; that stretch reads FRRRNESPGAQPAGKADKTTKSFK. Residues 821–830 are compositionally biased toward basic and acidic residues; that stretch reads KADKTTKSFK. The region spanning 842–967 is the RGS domain; it reads SLEKLLLHKY…INQKKMSPPL (126 aa).

As to quaternary structure, binds EFNB1 and EFNB2. Binds the GNB1-GNG2 heterodimer. Binds ESR1. Phosphorylated by cyclic GMP-dependent protein kinase. In terms of processing, ISGylated. As to expression, detected in kidney, uterus, ovary, heart, brain, spleen, lung and testis.

The protein resides in the cytoplasm. Its subcellular location is the membrane. The protein localises to the nucleus. Down-regulates signaling from heterotrimeric G-proteins by increasing the GTPase activity of the alpha subunits, thereby driving them into their inactive GDP-bound form. Down-regulates G-protein-mediated release of inositol phosphates and activation of MAP kinases. This chain is Regulator of G-protein signaling 3 (Rgs3), found in Rattus norvegicus (Rat).